A 181-amino-acid polypeptide reads, in one-letter code: uncharacterized protein (181 aa).

4 helical membrane passes run 3 to 23 (LSQT…VLIL), 67 to 87 (ALLL…GLSV), 92 to 112 (VLGV…VLFI), and 159 to 179 (MFIL…LWII).

The protein belongs to the YggT family.

The protein resides in the cell membrane. This is an uncharacterized protein from Haemophilus influenzae (strain ATCC 51907 / DSM 11121 / KW20 / Rd).